Consider the following 133-residue polypeptide: Large ribosomal subunit protein bL17 (133 aa).

The protein belongs to the bacterial ribosomal protein bL17 family. In terms of assembly, part of the 50S ribosomal subunit. Contacts protein L32.

This is Large ribosomal subunit protein bL17 from Nitratidesulfovibrio vulgaris (strain DSM 19637 / Miyazaki F) (Desulfovibrio vulgaris).